We begin with the raw amino-acid sequence, 760 residues long: General transcription and DNA repair factor IIH helicase subunit XPD (760 aa).

A Helicase ATP-binding domain is found at 7 to 283; sequence GLLVYFPYDY…KETDEQRLRE (277 aa). Residue 42-49 coordinates ATP; it reads MPSGTGKT. [4Fe-4S] cluster is bound by residues Cys-116, Cys-134, Cys-155, and Cys-190. The DEAH box motif lies at 234–237; that stretch reads DEAH. Residues 438–637 form a mediates interaction with MMS19 region; it reads MDASLAIKPV…TQSRILKARL (200 aa). A Nuclear localization signal motif is present at residues 682–695; that stretch reads KRFARADKRGKLPR.

This sequence belongs to the helicase family. RAD3/XPD subfamily. Component of the 7-subunit TFIIH core complex composed of XPB/ERCC3, XPD/ERCC2, GTF2H1, GTF2H2, GTF2H3, GTF2H4 and GTF2H5, which is active in NER. The core complex associates with the 3-subunit CDK-activating kinase (CAK) module composed of CCNH/cyclin H, CDK7 and MNAT1 to form the 10-subunit holoenzyme (holo-TFIIH) active in transcription. The interaction with GTF2H2 results in the stimulation of the 5'--&gt;3' helicase activity. Component of the MMXD complex, which includes CIAO1, ERCC2, CIAO2B, MMS19 and SLC25A5. Interacts with CIAO1 and CIAO2B; the interaction WITH CIAO2B is direct. Interacts with ATF7IP. Interacts directly with MMS19. Part of TBP-based Pol II pre-initiation complex (PIC), in which Pol II core assembles with general transcription factors and other specific initiation factors including GTF2E1, GTF2E2, GTF2F1, GTF2F2, TCEA1, ERCC2, ERCC3, GTF2H2, GTF2H3, GTF2H4, GTF2H5, GTF2A1, GTF2A2, GTF2B and TBP; this large multi-subunit PIC complex mediates DNA unwinding and targets Pol II core to the transcription start site where the first phosphodiester bond forms. The cofactor is Mg(2+). [4Fe-4S] cluster is required as a cofactor. ISGylated.

It is found in the nucleus. The protein localises to the cytoplasm. It localises to the cytoskeleton. The protein resides in the spindle. The enzyme catalyses Couples ATP hydrolysis with the unwinding of duplex DNA at the replication fork by translocating in the 5'-3' direction. This creates two antiparallel DNA single strands (ssDNA). The leading ssDNA polymer is the template for DNA polymerase III holoenzyme which synthesizes a continuous strand.. It catalyses the reaction ATP + H2O = ADP + phosphate + H(+). Its function is as follows. ATP-dependent 5'-3' DNA helicase, component of the general transcription and DNA repair factor IIH (TFIIH) core complex, which is involved in general and transcription-coupled nucleotide excision repair (NER) of damaged DNA and, when complexed to CDK-activating kinase (CAK), involved in transcription by RNA polymerase II. In NER, TFIIH acts by opening DNA around the lesion to allow the excision of the damaged oligonucleotide and its replacement by a new DNA fragment. The ATP-dependent helicase activity of XPD/ERCC2 is required for DNA opening. In transcription, TFIIH has an essential role in transcription initiation. When the pre-initiation complex (PIC) has been established, TFIIH is required for promoter opening and promoter escape. Phosphorylation of the C-terminal tail (CTD) of the largest subunit of RNA polymerase II by the kinase module CAK controls the initiation of transcription. XPD/ERCC2 acts by forming a bridge between CAK and the core-TFIIH complex. Involved in the regulation of vitamin-D receptor activity. As part of the mitotic spindle-associated MMXD complex it plays a role in chromosome segregation. Might have a role in aging process and could play a causative role in the generation of skin cancers. This is General transcription and DNA repair factor IIH helicase subunit XPD (ERCC2) from Bos taurus (Bovine).